The primary structure comprises 1460 residues: DNA-binding protein RFX7 (1460 aa).

The disordered stretch occupies residues 1-34; it reads MAEEQQQPPPQQPDAHQQLPPSAPNSGVALPALV. Residues 108–183 constitute a DNA-binding region (RFX-type winged-helix); sequence AFSWIRNTLE…YCYSGLRKKA (76 aa). Residues 188–193 carry the PxLPxI/L motif; mediates interaction with ANKRA2 and RFXANK motif; it reads PTLPNL. Positions 308–352 are disordered; it reads QRKIQKKQQEQKLQSPLPGESAAKKSESATSNGVTNLPNGNPSIL. The residue at position 322 (Ser322) is a Phosphoserine. Over residues 337-352 the composition is skewed to polar residues; sequence TSNGVTNLPNGNPSIL. Ser379 carries the phosphoserine modification. Residues 404–416 show a composition bias toward polar residues; that stretch reads SVKQAPKTPQNVP. The tract at residues 404–428 is disordered; sequence SVKQAPKTPQNVPASPGGDRSARHR. 2 positions are modified to phosphoserine: Ser418 and Ser455. Over residues 481 to 513 the composition is skewed to polar residues; that stretch reads TPSNSNTPLKHSASVSSATGTTEESRSVPQIKN. 3 disordered regions span residues 481–585, 632–715, and 917–1015; these read TPSN…PSNE, TFTS…AQIP, and QSVT…SVPP. Over residues 515-535 the composition is skewed to low complexity; that stretch reads SVVSLQSPGSRSSSAGGTSAV. Residues 537–549 are compositionally biased toward basic and acidic residues; the sequence is VKVEPETSSDEHP. Composition is skewed to polar residues over residues 563–583 and 632–644; these read QTPSALLGQKSNTDGALQKPS and TFTSSSSPPNGDS. The residue at position 564 (Thr564) is a Phosphothreonine. Position 662 is a phosphoserine (Ser662). An N6-acetyllysine modification is found at Lys704. 2 stretches are compositionally biased toward polar residues: residues 705-715 and 917-933; these read TEGSTAGAQIP and QSVTPGAPMSSHTSSTH. Residues 947–963 show a composition bias toward pro residues; the sequence is TPTPTPTPTPTPTPTPT. Over residues 971 to 1009 the composition is skewed to polar residues; the sequence is GSQSLSRESPCSRLAQTTPVDSALGSSRHTPIGTPHSNC. A Phosphothreonine modification is found at Thr988. 2 positions are modified to phosphoserine: Ser1178 and Ser1329.

Belongs to the RFX family. In terms of assembly, interacts (via PxLPxI/L motif) with RFXANK (via ankyrin repeats). Interacts (via PxLPxI/L motif) with ANKRA2 (via ankyrin repeats). Widely expressed in many different tissue types including thymus and placenta, with high expression in brain. Expressed in both inhibitory and excitatory neurons in cortex.

It is found in the nucleus. Functionally, transcription factor. Acts as a transcriptional activator by binding to promoter regions of target genes, such as PDCD4, PIK3IP1, MXD4, PNRC1, and RFX5. Plays a role in natural killer (NK) cell maintenance and immunity. May play a role in the process of ciliogenesis in the neural tube and neural tube closure. The polypeptide is DNA-binding protein RFX7 (Homo sapiens (Human)).